We begin with the raw amino-acid sequence, 454 residues long: tRNA modification GTPase MnmE (454 aa).

The (6S)-5-formyl-5,6,7,8-tetrahydrofolate site is built by arginine 23, glutamate 80, and lysine 120. Residues 216-377 (GMKVVIAGRP…LRDHLKQSMG (162 aa)) form the TrmE-type G domain. K(+) is bound at residue asparagine 226. GTP is bound by residues 226-231 (NAGKSS), 245-251 (TDIAGTT), 270-273 (DTAG), 335-338 (NKAD), and 358-360 (SAR). Residue serine 230 coordinates Mg(2+). K(+) is bound by residues threonine 245, isoleucine 247, and threonine 250. Threonine 251 is a Mg(2+) binding site. Lysine 454 is a binding site for (6S)-5-formyl-5,6,7,8-tetrahydrofolate.

The protein belongs to the TRAFAC class TrmE-Era-EngA-EngB-Septin-like GTPase superfamily. TrmE GTPase family. As to quaternary structure, homodimer. Heterotetramer of two MnmE and two MnmG subunits. K(+) serves as cofactor.

The protein resides in the cytoplasm. Exhibits a very high intrinsic GTPase hydrolysis rate. Involved in the addition of a carboxymethylaminomethyl (cmnm) group at the wobble position (U34) of certain tRNAs, forming tRNA-cmnm(5)s(2)U34. The sequence is that of tRNA modification GTPase MnmE from Yersinia pestis bv. Antiqua (strain Antiqua).